Consider the following 469-residue polypeptide: 2-oxoisovalerate dehydrogenase subunit beta, mitochondrial (469 aa).

The N-terminal 40 residues, 1 to 40 (MKRSTVVIRPSARALSRQASSQSFLLARSSALTSRQRRLY), are a transit peptide targeting the mitochondrion. Tyr-167 provides a ligand contact to thiamine diphosphate. Gly-194, Leu-196, and Thr-197 together coordinate K(+).

In terms of assembly, heterotetramer of 2 alpha and 2 beta chains. Requires thiamine diphosphate as cofactor.

It is found in the mitochondrion matrix. It catalyses the reaction N(6)-[(R)-lipoyl]-L-lysyl-[protein] + 3-methyl-2-oxobutanoate + H(+) = N(6)-[(R)-S(8)-2-methylpropanoyldihydrolipoyl]-L-lysyl-[protein] + CO2. In terms of biological role, the branched-chain alpha-keto dehydrogenase complex catalyzes the overall conversion of alpha-keto acids to acyl-CoA and CO(2). It contains multiple copies of three enzymatic components: branched-chain alpha-keto acid decarboxylase (E1), lipoamide acyltransferase (E2) and lipoamide dehydrogenase (E3). In Chaetomium thermophilum (strain DSM 1495 / CBS 144.50 / IMI 039719) (Thermochaetoides thermophila), this protein is 2-oxoisovalerate dehydrogenase subunit beta, mitochondrial.